A 1043-amino-acid chain; its full sequence is Glutamate receptor ionotropic, NMDA 3B (1043 aa).

An N-terminal signal peptide occupies residues 1–22 (MEFVRALWLGLALALGPGSAGG). Over 23–574 (HPQPCGVLAR…PIGAFMWPLH (552 aa)) the chain is Extracellular. Residues Asn69, Asn344, Asn451, and Asn465 are each glycosylated (N-linked (GlcNAc...) asparagine). Cystine bridges form between Cys439–Cys475 and Cys445–Cys476. Glycine contacts are provided by Ser531, Ser533, and Arg538. The D-serine site is built by Ser533 and Arg538. A helical transmembrane segment spans residues 575–594 (WSTWLGVFAALHLTALFLTV). The Cytoplasmic segment spans residues 595–615 (YEWRSPYGLTPRGRNRSTVFS). The segment at residues 616–627 (YSSALNLCYAIL) is an intramembrane region (discontinuously helical). Over 628 to 641 (FRRTVSSKTPKCPT) the chain is Cytoplasmic. The chain crosses the membrane as a helical span at residues 642–661 (GRLLMNLWAIFCLLVLSSYT). The Extracellular portion of the chain corresponds to 662 to 832 (ANLAAVMVGD…TLQMSIYHFA (171 aa)). Glycine is bound at residue Ser701. D-serine is bound by residues Ser701, Ala702, and Asp745. Residue Asp745 coordinates glycine. A glycan (N-linked (GlcNAc...) asparagine) is linked at Asn786. Residues 833–848 (GLFVLLCLGLGSALLS) form a helical membrane-spanning segment. The Cytoplasmic portion of the chain corresponds to 849–1043 (SLGEHAFFRL…PHSGRPGSQE (195 aa)). Disordered stretches follow at residues 882–924 (ALNT…WKRA) and 1012–1043 (GDSA…GSQE). The interval 979 to 1012 (QPGELQELERRIEVARERLRQALVRRGQLLAQLG) is involved in the trafficking and surface expression of NMDARs. Residues 1024–1035 (QARAAPAEAPPH) show a composition bias toward low complexity.

This sequence belongs to the glutamate-gated ion channel (TC 1.A.10.1) family. NR3B/GRIN3B subfamily. As to quaternary structure, forms heterotetrameric channels that contain at least two GluN1 subunits and at least a combination of one GluN2 and one GluN3 subunits (in vitro). Forms heterotetrameric channels composed of two GluN1/zeta subunits (GRIN1), and two identical GluN3 subunits (GRIN3A or GRIN3B) (in vitro). Does not form functional homomeric channels.

It localises to the cell membrane. The protein resides in the postsynaptic cell membrane. It catalyses the reaction Ca(2+)(in) = Ca(2+)(out). The enzyme catalyses Na(+)(in) = Na(+)(out). Component of a non-conventional N-methyl-D-aspartate (NMDA) receptors (NMDARs) that function as heterotetrameric, ligand-gated cation channels with low calcium permeability and low voltage-dependent block by Mg(2+). Forms glutamatergic receptor complexes with GluN1 and GluN2 subunits which are activated by glycine binding to the GluN1 and GluN3 subunits and L-glutamate binding to GluN2 subunits. Forms excitatory glycinergic receptor complexes with GluN1 alone which are activated by glycine binding to the GluN1 and GluN3 subunits. GluN3B subunit also binds D-serine and, in the absence of glycine, activates glycinergic receptor complexes, but with lower efficacy than glycine. Each GluN3 subunit confers differential attributes to channel properties, including activation, deactivation and desensitization kinetics, pH sensitivity, Ca2(+) permeability, and binding to allosteric modulators. This Homo sapiens (Human) protein is Glutamate receptor ionotropic, NMDA 3B.